A 925-amino-acid chain; its full sequence is MQPSLIPSLLETAAARNGDGRVILYSQGNREDPRSITYRDLLETASKASVAVHNHQNYTPGAAVLLHFNNHLDNIVWFWAVLLAGCIPAITPAFSNNPVQRVANLEHLSSTLITDWCLTSQALLAEFAGQDAIEPVSVETLGWEKASPASNTASVKAKPTDTALLLFTSGSTGKSKAVCLSHFQIVSAIAGKLSVVPLPEQSSFLNWVGLDHVAAIIEIHLQALYADLDQVHVPGSDVISDPIWFLDLMATHRVSRTFAPNFFLARIRDALVQNARSASPRQWDLSGLRYVASGGEANTTKTCDDLSQLLKSFGAPLNVIVPGFGMTETCAGAIFNTNCPDYDKKHGLEYTSVGSCMPGIFMRVTNQQGDPLPPGEMGSLELAGPVVFRQYLNNPAATQESFTMDGWFKTGDCGTLDENGYLVLGGRAKETIIINGVKYSPHEIETAVEEHNIKGLSRSFTCCFSSLSPGAETEEIVLVYLPTYAPEDIPARAATADAISKVVLMSTGSRPHIIPLEQALLPKSTLGKLSRSKIKAAYERGEYRTHDSINRSLIARHRQATRASPKNDFEKGLLEIFLRSFKISEDEFDVQTPIFDVGIDSIELINLKRDIEQHLGFADATIPIIILLENTTVRELAAALDNLYRPKEYNPVVTLQAHGDKNPLWLVHPGAGEVLIFINLAKFITDRPVYALRARGFDEGEKPFDSIEDAVTSYYNGVKSKQPHGPYALAGYCYGSMLAFEVAKKLEENGDEVRFVGSFNLPPHIKMRMRELDWKECLLHLAYFLDLITQKRSRELAVELDGLDQDTILQAIIDEADKERYAQLSLSRPFLSRWADVAYELHRIAGDYDPDGRVASMDVFFSIPLAIAAASKSEWRNVHLSQWDDFTRSHVRFHDVPGEHYSMIGPEHVFAFQKILRSALAERGM.

Residues 11–434 form an adenylation (A) domain region; sequence ETAAARNGDG…GGRAKETIII (424 aa). The Carrier domain maps to 564-644; sequence SPKNDFEKGL…ELAAALDNLY (81 aa). Ser601 carries the O-(pantetheine 4'-phosphoryl)serine modification. Residues 663-923 are thioesterase (TE) domain; the sequence is PLWLVHPGAG…KILRSALAER (261 aa).

This sequence belongs to the ATP-dependent AMP-binding enzyme family.

It localises to the cytoplasm. Its function is as follows. Nonribosomal peptide synthase; part of the gene cluster that mediates the biosynthesis of Asp-melanin, a pigment that confers resistance against UV light and hampers phagocytosis by soil amoeba. The nonribosomal peptide synthase melA converts 4-hydroxyphenylpyruvate (4-HPPA) to aspulvinone E. The tyrosinase tyrP then performs hydroxylations of both aromatic moieties of aspulvinone E. The product of tyrP is highly unstable, and, due to the high reactivity of methides and ortho-diquinones, the polymeric Asp-melanin forms spontaneously. The chain is Aspulvinone E synthetase melA from Aspergillus terreus.